The following is a 411-amino-acid chain: Diaminobutyrate--2-oxoglutarate transaminase (411 aa).

The residue at position 262 (Lys-262) is an N6-(pyridoxal phosphate)lysine.

The protein belongs to the class-III pyridoxal-phosphate-dependent aminotransferase family. It depends on pyridoxal 5'-phosphate as a cofactor.

The enzyme catalyses L-2,4-diaminobutanoate + 2-oxoglutarate = L-aspartate 4-semialdehyde + L-glutamate. Its pathway is amine and polyamine biosynthesis; ectoine biosynthesis; L-ectoine from L-aspartate 4-semialdehyde: step 1/3. In terms of biological role, catalyzes reversively the conversion of L-aspartate beta-semialdehyde (ASA) to L-2,4-diaminobutyrate (DABA) by transamination with L-glutamate. This is Diaminobutyrate--2-oxoglutarate transaminase (ectB) from Vibrio cholerae serotype O1 (strain ATCC 39315 / El Tor Inaba N16961).